Consider the following 948-residue polypeptide: Putative helicase 009L (948 aa).

The 180-residue stretch at 64–243 folds into the Helicase ATP-binding domain; it reads LSEDTPYREL…ADVLNLILPQ (180 aa). ATP is bound at residue 77–84; that stretch reads HAPGTGKT. Positions 187–190 match the DEAH box motif; the sequence is DEVH. The 184-residue stretch at 371 to 554 folds into the Helicase C-terminal domain; the sequence is VKYDYLVRVA…AVERILMTSA (184 aa).

In Frog virus 3 (isolate Goorha) (FV-3), this protein is Putative helicase 009L.